A 290-amino-acid polypeptide reads, in one-letter code: 4-hydroxy-tetrahydrodipicolinate synthase (290 aa).

Threonine 44 contributes to the pyruvate binding site. The Proton donor/acceptor role is filled by tyrosine 132. The Schiff-base intermediate with substrate role is filled by lysine 160. Isoleucine 202 serves as a coordination point for pyruvate.

The protein belongs to the DapA family. In terms of assembly, homotetramer; dimer of dimers.

It is found in the cytoplasm. The enzyme catalyses L-aspartate 4-semialdehyde + pyruvate = (2S,4S)-4-hydroxy-2,3,4,5-tetrahydrodipicolinate + H2O + H(+). The protein operates within amino-acid biosynthesis; L-lysine biosynthesis via DAP pathway; (S)-tetrahydrodipicolinate from L-aspartate: step 3/4. Catalyzes the condensation of (S)-aspartate-beta-semialdehyde [(S)-ASA] and pyruvate to 4-hydroxy-tetrahydrodipicolinate (HTPA). This chain is 4-hydroxy-tetrahydrodipicolinate synthase, found in Legionella pneumophila subsp. pneumophila (strain Philadelphia 1 / ATCC 33152 / DSM 7513).